The sequence spans 499 residues: Neuronal acetylcholine receptor subunit alpha-3 (499 aa).

The first 25 residues, 1–25, serve as a signal peptide directing secretion; that stretch reads MGVVLPPPPLSMLMLVLMLLPVASA. At 26–244 the chain is on the extracellular side; it reads SEAEHRLFQY…PLFYTINLII (219 aa). Residues asparagine 49 and asparagine 166 are each glycosylated (N-linked (GlcNAc...) asparagine). 2 disulfide bridges follow: cysteine 153–cysteine 167 and cysteine 217–cysteine 218. Residues 245–260 traverse the membrane as a helical segment; that stretch reads PCLLISFLTVLVFYLP. The Cytoplasmic portion of the chain corresponds to 261 to 262; that stretch reads SD. A helical membrane pass occupies residues 263–279; the sequence is CGEKVTLCISVLLSLTV. Residue glutamate 265 coordinates Na(+). Residues 280–301 are Extracellular-facing; it reads FLLVITETIPSTSLVIPLIGEY. The chain crosses the membrane as a helical span at residues 302-320; the sequence is LLFTMIFVTLSIVITVFVL. The Cytoplasmic portion of the chain corresponds to 321–468; sequence NVHYRTPTTH…QDDWKYVAMV (148 aa). Phosphoserine is present on residues serine 407 and serine 410. A helical transmembrane segment spans residues 469 to 487; that stretch reads IDRIFLWVFILVCILGTAG. Over 488–499 the chain is Extracellular; sequence LFLQPLMARDDT.

Belongs to the ligand-gated ion channel (TC 1.A.9) family. Acetylcholine receptor (TC 1.A.9.1) subfamily. Alpha-3/CHRNA3 sub-subfamily. As to quaternary structure, neuronal AChR is composed of two different types of subunits: alpha and beta. CHRNA3/Alpha-3 subunit can be combined to CHRNB2/beta-2 or CHRNB4/beta-4 to give rise to functional receptors. Part of a complex composed of STUB1/CHIP, VCP/p97, CHRNA3, and UBXN2A that modulates the ubiquitination and endoplasmic reticulum-associated degradation (ERAD) of CHRNA3. Within the complex UBXN2A acts as a scaffold protein required for the interaction of CHRNA3 with VCP/p97, this interaction also inhibits CHRNA3 ubiquitination by STUB1/CHIP and subsequently ERAD. Interacts with UBXN2A (via SEP domain), the interaction is required for the interaction of CHRNA3 in the STUB1:VCP:UBXN2A complex. Interacts with RIC3; which is required for proper folding and assembly. Interacts with LYPD6. Ubiquitinated; by STUB1/CHIP and thereafter degraded by the 26S proteosome complex. As to expression, expressed in the brain (at protein level).

It localises to the synaptic cell membrane. The protein resides in the cell membrane. Its subcellular location is the endoplasmic reticulum. It is found in the golgi apparatus. It carries out the reaction K(+)(in) = K(+)(out). It catalyses the reaction Na(+)(in) = Na(+)(out). The catalysed reaction is Ca(2+)(in) = Ca(2+)(out). Activated by a myriad of ligands such as acetylcholine, cytisine, nicotine, choline and epibatidine. The heteropentamer CHRNA3:CHRNB2 activity is blocked by alpha-conotoxins ImI, ImII, PnIA, GID and MII. The heteropentamer CHRNA3:CHRNB4 activity is blocked by the alpha-conotoxin ImI. Component of neuronal acetylcholine receptors (nAChRs) that function as pentameric, ligand-gated cation channels with high calcium permeability among other activities. nAChRs are excitatory neurotrasnmitter receptors formed by a collection of nAChR subunits known to mediate synaptic transmission in the nervous system and the neuromuscular junction. Each nAchR subunit confers differential attributes to channel properties, including activation, deactivation and desensitization kinetics, pH sensitivity, cation permeability, and binding to allosteric modulators. CHRNA3 forms heteropentameric neuronal acetylcholine receptors with CHRNA5, CHRNB2 and CHRNB4. CHRNA3:CHRNB4 being predominant in neurons of the autonomic ganglia, it is known as ganglionic nicotinic receptor. CHRNA3:CHRNB4 or CHRNA3:CHRNA5:CHRNB4 play also an important role in the habenulo-interpeduncular tract, modulating the mesolimbic dopamine system and affecting reward circuits and addiction. Hypothalamic CHRNA3:CHRNB4 nAChR activation by nicotine leads to activation of POMC neurons and a decrease in food intake. Also expressed in the urothelium where it modulates reflex bladder activity by increasing intracellular calcium through extracellular influx and basal ATP release. The protein is Neuronal acetylcholine receptor subunit alpha-3 (Chrna3) of Mus musculus (Mouse).